The chain runs to 354 residues: ORC1-type DNA replication protein 9 (354 aa).

ATP is bound by residues 63-67 (TGKTC), Tyr195, and Arg207.

The protein belongs to the CDC6/cdc18 family.

Functionally, involved in regulation of DNA replication. The protein is ORC1-type DNA replication protein 9 (orc9-1) of Halobacterium salinarum (strain ATCC 700922 / JCM 11081 / NRC-1) (Halobacterium halobium).